The primary structure comprises 420 residues: MTQRRVAITGIEVLAPGGLGRKEFWQLLSEGRTATRGITFFDPAPFRSKVAAEADFCGLENGLSPQEVRRMDRAAQFAVVTARAVEDSGAELAAHPPHRIGVVVGSAVGATMGLDNEYRVVSDGGRLDLVDHRYAVPHLYNYLVPSSFAAEVAWAVGAEGPSTVVSTGCTSGIDAVGIAVELVREGSVDVMVAGAVDAPISPIPCVLDAIKATTPRHDAPATASRPFDSTRNGFVLGEGAAFFVLEELHSARRRGAHIYAEIAGYATRSNAYHMTGLRDGAEMAEAIRLALDEARLNPEQVDYINAHGSGTKQNDRHETAAFKKALGEHAYRTPVSSIKSMVGHSLGAIGSIEIAASALAMEYDVVPPTANLHTPDPECDLDYVPLTARDQRVDSVLTVGSGFGGFQSAMVLTSAQRSTV.

Positions 3–414 constitute a Ketosynthase family 3 (KS3) domain; that stretch reads QRRVAITGIE…GFQSAMVLTS (412 aa). Catalysis depends on for beta-ketoacyl synthase activity residues cysteine 169, histidine 307, and histidine 344.

The protein belongs to the thiolase-like superfamily. Beta-ketoacyl-ACP synthases family.

Its pathway is antifungal biosynthesis; monensin biosynthesis. The protein is Putative polyketide beta-ketoacyl synthase 1 of Streptomyces virginiae (Streptomyces cinnamonensis).